Reading from the N-terminus, the 385-residue chain is Protein kup-1 (385 aa).

2 disordered regions span residues 1–20 (MDDE…VRED) and 326–385 (SLAS…PDEY). 3 stretches are compositionally biased toward basic and acidic residues: residues 8–20 (GSDH…VRED), 339–351 (RTDE…DDIV), and 364–385 (GRVE…PDEY).

The polypeptide is Protein kup-1 (kup-1) (Caenorhabditis elegans).